We begin with the raw amino-acid sequence, 302 residues long: Sulfate adenylyltransferase subunit 2 (302 aa).

The disordered stretch occupies residues 280–302 (RQGRLIDSDQSASMEQKKRQGYF).

Belongs to the PAPS reductase family. CysD subfamily. Heterodimer composed of CysD, the smaller subunit, and CysN.

The enzyme catalyses sulfate + ATP + H(+) = adenosine 5'-phosphosulfate + diphosphate. It functions in the pathway sulfur metabolism; hydrogen sulfide biosynthesis; sulfite from sulfate: step 1/3. With CysN forms the ATP sulfurylase (ATPS) that catalyzes the adenylation of sulfate producing adenosine 5'-phosphosulfate (APS) and diphosphate, the first enzymatic step in sulfur assimilation pathway. APS synthesis involves the formation of a high-energy phosphoric-sulfuric acid anhydride bond driven by GTP hydrolysis by CysN coupled to ATP hydrolysis by CysD. In Shewanella baltica (strain OS195), this protein is Sulfate adenylyltransferase subunit 2.